A 90-amino-acid chain; its full sequence is Gene 56 protein (90 aa).

A Glutaredoxin domain is found at 1-90 (MRTMFTPITI…DYYTASETGL (90 aa)). A disulfide bridge links Cys-16 with Cys-19.

The protein is Gene 56 protein (56) of Mycobacterium phage D29 (Mycobacteriophage D29).